Consider the following 804-residue polypeptide: G-type lectin S-receptor-like serine/threonine-protein kinase At1g61500 (804 aa).

The first 24 residues, 1–24, serve as a signal peptide directing secretion; it reads MMTRFACLHLFTMFLFTLLSGSSS. In terms of domain architecture, Bulb-type lectin spans 25–145; sequence AVITTESPLS…VSERALWQSF (121 aa). Residues 25 to 427 lie on the Extracellular side of the membrane; it reads AVITTESPLS…ELDGNKRKKT (403 aa). N-linked (GlcNAc...) asparagine glycosylation is found at N54, N135, and N237. Positions 279-315 constitute an EGF-like; atypical domain; it reads PKKLCDFYGACGPFGLCVMSPSPMCKCFRGFVPKSVE. Cystine bridges form between C283/C295 and C289/C303. N321, N337, and N376 each carry an N-linked (GlcNAc...) asparagine glycan. The region spanning 334 to 416 is the PAN domain; sequence CLGNSTGEDA…GELLSIRLAR (83 aa). Disulfide bonds link C369/C390 and C373/C379. The helical transmembrane segment at 428 to 448 threads the bilayer; that stretch reads IVASIVSLTLFMILGFTAFGV. At 449-804 the chain is on the cytoplasmic side; the sequence is WRCRVEHIAH…GMTQSVILGR (356 aa). The 286-residue stretch at 491-776 folds into the Protein kinase domain; it reads FSLSNKLGQG…DLPSPKQPTF (286 aa). Residues 497 to 505 and K519 each bind ATP; that span reads LGQGGFGSV. A phosphoserine mark is found at S525 and S540. A caM-binding region spans residues 580–597; it reads RKRLEIDWPKRFDIIQGI. The Proton acceptor role is filled by D616. A phosphoserine mark is found at S620 and S633. Position 650 is a phosphothreonine (T650). A phosphoserine mark is found at S693 and S787.

The protein belongs to the protein kinase superfamily. Ser/Thr protein kinase family.

The protein localises to the cell membrane. The enzyme catalyses L-seryl-[protein] + ATP = O-phospho-L-seryl-[protein] + ADP + H(+). It catalyses the reaction L-threonyl-[protein] + ATP = O-phospho-L-threonyl-[protein] + ADP + H(+). This chain is G-type lectin S-receptor-like serine/threonine-protein kinase At1g61500, found in Arabidopsis thaliana (Mouse-ear cress).